Here is a 254-residue protein sequence, read N- to C-terminus: Cell division protein ZapD (254 aa).

It belongs to the ZapD family. As to quaternary structure, interacts with FtsZ.

Its subcellular location is the cytoplasm. Functionally, cell division factor that enhances FtsZ-ring assembly. Directly interacts with FtsZ and promotes bundling of FtsZ protofilaments, with a reduction in FtsZ GTPase activity. This Idiomarina loihiensis (strain ATCC BAA-735 / DSM 15497 / L2-TR) protein is Cell division protein ZapD.